The chain runs to 133 residues: Interleukin-5 (133 aa).

The signal sequence occupies residues 1 to 20; sequence MRRMLLHLSVLTLSCVWATA. N-linked (GlcNAc...) asparagine glycans are attached at residues Asn46, Asn75, and Asn89.

It belongs to the IL-5 family. As to quaternary structure, homodimer; disulfide-linked. Interacts with IL5RA. Interacts with CSF2RB. As to expression, expressed in lymphoid cells, including spleen, thymus, lymph nodes and peripheral blood mononuclear cells.

The protein localises to the secreted. In terms of biological role, homodimeric cytokine expressed predominantly by T-lymphocytes and NK cells that plays an important role in the survival, differentiation, and chemotaxis of eosinophils. Also acts on activated and resting B-cells to induce immunoglobulin production, growth, and differentiation. Mechanistically, exerts its biological effects through a receptor composed of IL5RA subunit and the cytokine receptor common subunit beta/CSF2RB. Binding to the receptor leads to activation of various kinases including LYN, SYK and JAK2 and thereby propagates signals through the RAS-MAPK and JAK-STAT5 pathways respectively. The protein is Interleukin-5 (Il5) of Mus musculus (Mouse).